The chain runs to 373 residues: MSMSIDSNKLLLRKGDMKLDNYPTCAVEALTRLETLIASRNKQNMVMQIISEFIFLERTPKDGDVRKSQALPISQMNLFQEFQLIIALIEYFSRPGRDATRNAIFLSLFGSHLTPQRSKLLSRLISTAVSGSVAPLLSSAGTWMQQVGCKTPLSLEVAQNIVSDFISYSRKTPEQLKQLPMVGPHFAANFMVAVADLYLNEQRSPTLNPPPDALLDTITEWMMENPTLCQASQQPLVLPAGAIAMPFTTPLAGLLRWVVLAPLVSNRSAYSNLHLSLLRALQQLVSSGESTALPSQDLMQIVKSLQSYCARLAESKTDPQADAAYQKCMERFAQAVQIALSSNCITNQIQLLCLLESLPPHKLMKIVIEAHKK.

It belongs to the Integrator subunit 15 family. In terms of assembly, belongs to the multiprotein complex Integrator, at least composed of IntS1, IntS2, IntS3, IntS4, omd/IntS5, IntS6, defl/IntS7, IntS8, IntS9, IntS10, IntS11, IntS12, asun/IntS13, IntS14 and IntS15. The core complex associates with protein phosphatase 2A subunits mts/PP2A and Pp2A-29B, to form the Integrator-PP2A (INTAC) complex.

The protein resides in the nucleus. Its function is as follows. Component of the integrator complex, a multiprotein complex that terminates RNA polymerase II (Pol II) transcription in the promoter-proximal region of genes. The integrator complex provides a quality checkpoint during transcription elongation by driving premature transcription termination of transcripts that are unfavorably configured for transcriptional elongation: the complex terminates transcription by (1) catalyzing dephosphorylation of the C-terminal domain (CTD) of Pol II subunit Rbp1 and Spt5, and (2) degrading the exiting nascent RNA transcript via endonuclease activity. The integrator complex is also involved in the 3'-end processing of the U7 snRNA, and also the spliceosomal snRNAs U1, U2, U4 and U5. The polypeptide is Integrator complex subunit 15 (Drosophila melanogaster (Fruit fly)).